The following is a 491-amino-acid chain: GTPase Der (491 aa).

EngA-type G domains are found at residues 3 to 166 (PVVA…AEAM) and 200 to 373 (IKLA…DSAT). GTP contacts are provided by residues 9–16 (GRPNVGKS), 56–60 (DTGGI), 118–121 (NKVD), 206–213 (GKPNVGKS), 253–257 (DTAGV), and 318–321 (NKWD). The region spanning 374-458 (RRVSTSMLTR…PIQIRFQEGD (85 aa)) is the KH-like domain. The interval 472–491 (QERRRKRALSHINDRKTKGE) is disordered.

Belongs to the TRAFAC class TrmE-Era-EngA-EngB-Septin-like GTPase superfamily. EngA (Der) GTPase family. In terms of assembly, associates with the 50S ribosomal subunit.

In terms of biological role, GTPase that plays an essential role in the late steps of ribosome biogenesis. The protein is GTPase Der of Shewanella denitrificans (strain OS217 / ATCC BAA-1090 / DSM 15013).